The chain runs to 364 residues: DNA polymerase IV (364 aa).

The UmuC domain maps to 14 to 198 (IIHIDMDAFF…LPIEKFHGVG (185 aa)). Mg(2+)-binding residues include Asp-18 and Asp-116. Glu-117 is a catalytic residue.

It belongs to the DNA polymerase type-Y family. As to quaternary structure, monomer. Mg(2+) is required as a cofactor.

Its subcellular location is the cytoplasm. The enzyme catalyses DNA(n) + a 2'-deoxyribonucleoside 5'-triphosphate = DNA(n+1) + diphosphate. Functionally, poorly processive, error-prone DNA polymerase involved in untargeted mutagenesis. Copies undamaged DNA at stalled replication forks, which arise in vivo from mismatched or misaligned primer ends. These misaligned primers can be extended by PolIV. Exhibits no 3'-5' exonuclease (proofreading) activity. May be involved in translesional synthesis, in conjunction with the beta clamp from PolIII. In Streptococcus pyogenes serotype M1, this protein is DNA polymerase IV.